The sequence spans 136 residues: Large ribosomal subunit protein eL27 (136 aa).

A KOW domain is found at methionine 5–histidine 40.

Belongs to the eukaryotic ribosomal protein eL27 family. Component of the large ribosomal subunit.

The protein resides in the cytoplasm. It is found in the cytosol. Its subcellular location is the rough endoplasmic reticulum. In terms of biological role, component of the large ribosomal subunit. This chain is Large ribosomal subunit protein eL27 (rpl27), found in Danio rerio (Zebrafish).